Consider the following 208-residue polypeptide: AN1-type zinc finger protein 6 (208 aa).

The A20-type zinc finger occupies 8–42 (SQVPMLCSTGCGFYGNPRTNGMCSVCYKEHLQRQN). Zn(2+)-binding residues include cysteine 14, cysteine 18, cysteine 30, and cysteine 33. Over residues 41-68 (QNSSNGRISPPATSVSSLSESLPVQCTD) the composition is skewed to polar residues. The tract at residues 41–140 (QNSSNGRISP…PSEEQSKSLE (100 aa)) is disordered. Serine 49 carries the post-translational modification Phosphoserine. A compositionally biased stretch (low complexity) spans 75–94 (QSTLDSTSSSMQPSPVSNQS). Polar residues-rich tracts occupy residues 95–110 (LLSE…STSV) and 120–133 (LQAS…QPSE). Residues 143-189 (KQKKNRCFMCRKKVGLTGFECRCGNVYCGVHRYSDVHNCSYNYKADA) form an AN1-type zinc finger. Zn(2+) contacts are provided by cysteine 149, cysteine 152, cysteine 163, cysteine 165, cysteine 170, histidine 173, histidine 179, and cysteine 181. An N6-acetyllysine modification is found at lysine 204.

In terms of assembly, interacts with PKN1. Interacts with TRAF2. Interacts with mono- and polyubiquitin. Interacts with PEX6. Interacts with PEX5 (Cys-linked ubiquitinated).

It is found in the cytoplasm. Involved in regulation of TNF-alpha induced NF-kappa-B activation and apoptosis. Involved in modulation of 'Lys-48'-linked polyubiquitination status of TRAF2 and decreases association of TRAF2 with RIPK1. Required for PTS1 target sequence-dependent protein import into peroxisomes and PEX5 stability; may cooperate with PEX6. In vitro involved in PEX5 export from the cytosol to peroxisomes. In Pongo abelii (Sumatran orangutan), this protein is AN1-type zinc finger protein 6 (ZFAND6).